Reading from the N-terminus, the 97-residue chain is C-C motif chemokine 7 (97 aa).

The signal sequence occupies residues 1-23; sequence MRISATLLCLLLIAAAFSIQVWA. Gln-24 is subject to Pyrrolidone carboxylic acid. Asn-29 carries N-linked (GlcNAc...) asparagine glycosylation. 2 disulfide bridges follow: Cys-33–Cys-57 and Cys-34–Cys-73.

The protein belongs to the intercrine beta (chemokine CC) family. In terms of assembly, monomer. Interacts with TNFAIP6 (via Link domain).

Its subcellular location is the secreted. Functionally, chemotactic factor that attracts monocytes and eosinophils, but not neutrophils. Augments monocyte anti-tumor activity. The polypeptide is C-C motif chemokine 7 (Ccl7) (Mus musculus (Mouse)).